A 255-amino-acid polypeptide reads, in one-letter code: (R)-S-adenosyl-L-methionine hydrolase (255 aa).

Adenosine is bound by residues Asp9, Asp70, and Asn186. Positions 186, 227, 232, and 235 each coordinate (R)-S-adenosyl-L-methionine. Val235 serves as a coordination point for adenosine.

It belongs to the SAM hydrolase / SAM-dependent halogenase family. In terms of assembly, homotrimer.

The catalysed reaction is (R)-S-adenosyl-L-methionine + H2O = adenosine + L-methionine + H(+). In terms of biological role, catalyzes the hydrolysis of S-adenosyl-L-methionine (SAM) into adenosine and L-methionine. Does not have chlorinase or fluorinase activity. The protein is (R)-S-adenosyl-L-methionine hydrolase of Thermus thermophilus (strain ATCC 27634 / DSM 579 / HB8).